Reading from the N-terminus, the 239-residue chain is RNA-binding protein 38 (239 aa).

In terms of domain architecture, RRM spans 34–111 (TKIFVGGLPY…RKANVNLAYL (78 aa)).

It belongs to the RBM38 family.

The protein resides in the cytoplasm. It is found in the cytosol. It localises to the nucleus. In terms of biological role, RNA-binding protein that specifically bind the 3'-UTR of CDKN1A transcripts, leading to maintain the stability of CDKN1A transcripts, thereby acting as a mediator of the p53/TP53 family to regulate CDKN1A. CDKN1A is a cyclin-dependent kinase inhibitor transcriptionally regulated by the p53/TP53 family to induce cell cycle arrest. Isoform 1, but not isoform 2, has the ability to induce cell cycle arrest in G1 and maintain the stability of CDKN1A transcripts induced by p53/TP53. Also acts as a mRNA splicing factor. Specifically regulates the expression of FGFR2-IIIb, an epithelial cell-specific isoform of FGFR2. Plays a role in myogenic differentiation. Its function is as follows. (Microbial infection) Essential factor for the splicing of the pre-mRNAs of human parvovirus B19 (B19V) and for the expression of B19V 11-kDa protein, which enhances viral replication. This is RNA-binding protein 38 (RBM38) from Homo sapiens (Human).